Consider the following 150-residue polypeptide: Probable cyclic pyranopterin monophosphate synthase (150 aa).

Substrate-binding positions include 68–70 and 104–105; these read YCH and ME. The active site involves Asp-119.

It belongs to the MoaC family. As to quaternary structure, homohexamer; trimer of dimers.

The catalysed reaction is (8S)-3',8-cyclo-7,8-dihydroguanosine 5'-triphosphate = cyclic pyranopterin phosphate + diphosphate. The protein operates within cofactor biosynthesis; molybdopterin biosynthesis. Its function is as follows. Catalyzes the conversion of (8S)-3',8-cyclo-7,8-dihydroguanosine 5'-triphosphate to cyclic pyranopterin monophosphate (cPMP). The sequence is that of Probable cyclic pyranopterin monophosphate synthase from Thermoplasma volcanium (strain ATCC 51530 / DSM 4299 / JCM 9571 / NBRC 15438 / GSS1).